The chain runs to 100 residues: Co-chaperonin GroES (100 aa).

Belongs to the GroES chaperonin family. As to quaternary structure, heptamer of 7 subunits arranged in a ring. Interacts with the chaperonin GroEL.

It is found in the cytoplasm. Its function is as follows. Together with the chaperonin GroEL, plays an essential role in assisting protein folding. The GroEL-GroES system forms a nano-cage that allows encapsulation of the non-native substrate proteins and provides a physical environment optimized to promote and accelerate protein folding. GroES binds to the apical surface of the GroEL ring, thereby capping the opening of the GroEL channel. The polypeptide is Co-chaperonin GroES (Mycobacterium leprae (strain Br4923)).